The following is a 143-amino-acid chain: Large ribosomal subunit protein uL11 (143 aa).

This sequence belongs to the universal ribosomal protein uL11 family. As to quaternary structure, part of the ribosomal stalk of the 50S ribosomal subunit. Interacts with L10 and the large rRNA to form the base of the stalk. L10 forms an elongated spine to which L12 dimers bind in a sequential fashion forming a multimeric L10(L12)X complex. In terms of processing, one or more lysine residues are methylated.

Its function is as follows. Forms part of the ribosomal stalk which helps the ribosome interact with GTP-bound translation factors. This Koribacter versatilis (strain Ellin345) protein is Large ribosomal subunit protein uL11.